Consider the following 123-residue polypeptide: Small ribosomal subunit protein uS12 (123 aa).

Asp89 bears the 3-methylthioaspartic acid mark. Positions 104–123 (TAGVKDRKQARSKYGAKRPK) are disordered. The span at 113-123 (ARSKYGAKRPK) shows a compositional bias: basic residues.

This sequence belongs to the universal ribosomal protein uS12 family. In terms of assembly, part of the 30S ribosomal subunit. Contacts proteins S8 and S17. May interact with IF1 in the 30S initiation complex.

Functionally, with S4 and S5 plays an important role in translational accuracy. Its function is as follows. Interacts with and stabilizes bases of the 16S rRNA that are involved in tRNA selection in the A site and with the mRNA backbone. Located at the interface of the 30S and 50S subunits, it traverses the body of the 30S subunit contacting proteins on the other side and probably holding the rRNA structure together. The combined cluster of proteins S8, S12 and S17 appears to hold together the shoulder and platform of the 30S subunit. This chain is Small ribosomal subunit protein uS12, found in Neisseria gonorrhoeae (strain ATCC 700825 / FA 1090).